A 190-amino-acid polypeptide reads, in one-letter code: Frataxin homolog, mitochondrial (190 aa).

The protein belongs to the frataxin family. As to quaternary structure, monomer (probable predominant form). Oligomer. Interacts with IscU. Component of the mitochondrial core iron-sulfur cluster (ISC) assembly complex at least composed of the cysteine desulfurase Nfs1, the scaffold protein IscU, the accessory protein bcn92/Isd11/Lyrm4, and probably fh/frataxin.

Its subcellular location is the mitochondrion. It catalyses the reaction 4 Fe(2+) + O2 + 4 H(+) = 4 Fe(3+) + 2 H2O. Functionally, promotes the biosynthesis of heme as well as the assembly and repair of iron-sulfur clusters by delivering Fe(2+) to proteins involved in these pathways. May play a role in the protection against iron-catalyzed oxidative stress through its ability to catalyze the oxidation of Fe(2+) to Fe(3+). May be able to store large amounts of the metal in the form of a ferrihydrite mineral by oligomerization. Required for ecdysteroidogenesis in the prothoracic gland which is necessary for larval to pupal transition. The sequence is that of Frataxin homolog, mitochondrial from Drosophila melanogaster (Fruit fly).